Consider the following 40-residue polypeptide: Bomanin Short 6 (40 aa).

Residues 1 to 18 (MKLLSITFLFGLLALASA) form the signal peptide. Positions 19–23 (NPLSP) are cleaved as a propeptide — removed by a dipeptidylpeptidase. The cysteines at positions 32 and 35 are disulfide-linked.

It belongs to the bomanin family.

Its subcellular location is the secreted. In terms of biological role, secreted immune-induced peptide induced by Toll signaling. Has a role in resistance to bacterial and fungal infections. The strength of antimicrobial activity appears to correlate with the overall level of expression. The protein is Bomanin Short 6 of Drosophila melanogaster (Fruit fly).